Consider the following 351-residue polypeptide: Neutral protease 2 homolog MGG_10927 (351 aa).

An N-terminal signal peptide occupies residues 1–16 (MKFSIGVSLLATLAGA). The propeptide occupies 17–177 (VNVDMAKRDT…AAFLAKRTIV (161 aa)). 2 cysteine pairs are disulfide-bonded: Cys-181/Cys-253 and Cys-260/Cys-278. Position 303 (His-303) interacts with Zn(2+). Glu-304 is a catalytic residue. His-307 serves as a coordination point for Zn(2+).

Belongs to the peptidase M35 family. Zn(2+) is required as a cofactor.

Its subcellular location is the secreted. It catalyses the reaction Preferential cleavage of bonds with hydrophobic residues in P1'. Also 3-Asn-|-Gln-4 and 8-Gly-|-Ser-9 bonds in insulin B chain.. Secreted metalloproteinase that allows assimilation of proteinaceous substrates. Shows high activities on basic nuclear substrates such as histone and protamine. In Colletotrichum graminicola (strain M1.001 / M2 / FGSC 10212) (Maize anthracnose fungus), this protein is Neutral protease 2 homolog MGG_10927.